The primary structure comprises 410 residues: Zinc finger protein 322 (410 aa).

8 C2H2-type zinc fingers span residues 81 to 103, 109 to 131, 137 to 159, 165 to 187, 193 to 215, 221 to 243, 249 to 271, and 277 to 299; these read YRCDMCEKTFIQSSDLISHQRIH, YKCSKCEKSFWHHLALSGHQRTH, YTCDICGKNFGQSSDLLVHQRSH, YLCNECDKCFSRSTNLIRHRRTH, FKCLECEKAFSGKSDLISHQRTH, YKCNKCEKSYRHRSAFIVHKRVH, YKCGACEKCFGQKSDLIVHQRVH, and YKCLECMRSFTRSANLIRHQATH. The segment at 303 to 325 adopts a C2H2-type 9; degenerate zinc-finger fold; it reads FKCLEYEKSFNCSSDFIVHQRIH. The C2H2-type 10; degenerate zinc-finger motif lies at 361-383; the sequence is YKYSVCDKTFHHSSALLQHQTVH. Residue S400 is modified to Phosphoserine.

It belongs to the krueppel C2H2-type zinc-finger protein family. In terms of assembly, interacts with POU5F1.

Its subcellular location is the nucleus. It is found in the cytoplasm. In terms of biological role, transcriptional activator. Important for maintenance of pluripotency in embryonic stem cells. Binds directly to the POU5F1 distal enhancer and the NANOG proximal promoter, and enhances expression of both genes. Can also bind to numerous other gene promoters and regulates expression of many other pluripotency factors, either directly or indirectly. Promotes inhibition of MAPK signaling during embryonic stem cell differentiation. In Mus musculus (Mouse), this protein is Zinc finger protein 322 (Znf322).